Consider the following 541-residue polypeptide: Chaperonin GroEL (541 aa).

Residues 29–32 (TLGP), 86–90 (DGTTT), Gly413, 476–478 (NAA), and Asp492 each bind ATP.

The protein belongs to the chaperonin (HSP60) family. In terms of assembly, forms a cylinder of 14 subunits composed of two heptameric rings stacked back-to-back. Interacts with the co-chaperonin GroES.

The protein localises to the cytoplasm. The enzyme catalyses ATP + H2O + a folded polypeptide = ADP + phosphate + an unfolded polypeptide.. Its function is as follows. Together with its co-chaperonin GroES, plays an essential role in assisting protein folding. The GroEL-GroES system forms a nano-cage that allows encapsulation of the non-native substrate proteins and provides a physical environment optimized to promote and accelerate protein folding. This chain is Chaperonin GroEL, found in Rhodococcus hoagii (Corynebacterium equii).